Consider the following 169-residue polypeptide: Centrin-1 (169 aa).

The tract at residues 1 to 21 (MHSRKGASSLPRGRGAGKKTE) is essential for homooligomerization. Positions 1–25 (MHSRKGASSLPRGRGAGKKTELTEE) are disordered. 4 consecutive EF-hand domains span residues 25–60 (EQRQ…LGFE), 61–96 (PKKE…KMAE), 98–133 (DPRE…LGEN), and 134–169 (LTDE…TNLF). Positions 38, 40, 42, 44, 49, 74, 76, 78, 80, and 85 each coordinate Ca(2+).

Belongs to the centrin family. As to quaternary structure, monomer. Homooligomerizes in a Ca(2+)-dependent manner. Interaction via the C-terminus with other proteins disrupts and/or prevents homooligomerization. Interacts with SFI1.

It localises to the cytoplasm. The protein resides in the cytoskeleton. The protein localises to the microtubule organizing center. Its subcellular location is the centrosome. Functionally, acts as a calcium sensor. Part of the centrosome outer core complex. This is Centrin-1 from Toxoplasma gondii (strain ATCC 50611 / Me49).